Here is an 89-residue protein sequence, read N- to C-terminus: Peroxidase (89 aa).

His-52 serves as a coordination point for heme. 2 residues coordinate Ca(2+): Thr-53 and Asp-68.

Heme b serves as cofactor. Ca(2+) is required as a cofactor.

Its subcellular location is the secreted. It carries out the reaction 2 a phenolic donor + H2O2 = 2 a phenolic radical donor + 2 H2O. Removal of H(2)O(2), oxidation of toxic reductants, biosynthesis and degradation of lignin, suberization, auxin catabolism, response to environmental stresses such as wounding, pathogen attack and oxidative stress. These functions might be dependent on each isozyme/isoform in each plant tissue. Active against p-coumaryl alcohol, coniferyl alcohol and coniferyl aldehyde. This chain is Peroxidase, found in Ginkgo biloba (Ginkgo).